An 84-amino-acid polypeptide reads, in one-letter code: Cell division topological specificity factor (84 aa).

This sequence belongs to the MinE family.

Its function is as follows. Prevents the cell division inhibition by proteins MinC and MinD at internal division sites while permitting inhibition at polar sites. This ensures cell division at the proper site by restricting the formation of a division septum at the midpoint of the long axis of the cell. The chain is Cell division topological specificity factor from Hydrogenovibrio crunogenus (strain DSM 25203 / XCL-2) (Thiomicrospira crunogena).